A 248-amino-acid polypeptide reads, in one-letter code: Indole-3-glycerol phosphate synthase (248 aa).

This sequence belongs to the TrpC family.

It carries out the reaction 1-(2-carboxyphenylamino)-1-deoxy-D-ribulose 5-phosphate + H(+) = (1S,2R)-1-C-(indol-3-yl)glycerol 3-phosphate + CO2 + H2O. It functions in the pathway amino-acid biosynthesis; L-tryptophan biosynthesis; L-tryptophan from chorismate: step 4/5. This Sulfolobus acidocaldarius (strain ATCC 33909 / DSM 639 / JCM 8929 / NBRC 15157 / NCIMB 11770) protein is Indole-3-glycerol phosphate synthase.